Here is a 101-residue protein sequence, read N- to C-terminus: Defensin-like protein 222 (101 aa).

Residues Met-1–Ala-21 form the signal peptide. 3 cysteine pairs are disulfide-bonded: Cys-68-Cys-85, Cys-71-Cys-90, and Cys-75-Cys-92.

It belongs to the DEFL family.

It localises to the secreted. This is Defensin-like protein 222 from Arabidopsis thaliana (Mouse-ear cress).